Reading from the N-terminus, the 270-residue chain is Phosphatidylglycerol--prolipoprotein diacylglyceryl transferase (270 aa).

A run of 4 helical transmembrane segments spans residues 19-39 (FPVYWYGIIIGTGVLLGLWLA), 56-76 (LVLIAVPIAILFARMYYVIFE), 92-112 (QGGLAIHGGLIGAVVTGILFA), and 116-136 (GVSFWKLADIAAPSILLGQAI). A 1,2-diacyl-sn-glycero-3-phospho-(1'-sn-glycerol) is bound at residue Arg138. The next 3 helical transmembrane spans lie at 178–198 (HPTFLYESLWNFAGVILLLAL), 206–226 (GELFFTYLIWYSIGRFFVEGL), and 236–256 (LRIAQVMSIGLVVISIIFIIV).

This sequence belongs to the Lgt family.

Its subcellular location is the cell membrane. The catalysed reaction is L-cysteinyl-[prolipoprotein] + a 1,2-diacyl-sn-glycero-3-phospho-(1'-sn-glycerol) = an S-1,2-diacyl-sn-glyceryl-L-cysteinyl-[prolipoprotein] + sn-glycerol 1-phosphate + H(+). Its pathway is protein modification; lipoprotein biosynthesis (diacylglyceryl transfer). Catalyzes the transfer of the diacylglyceryl group from phosphatidylglycerol to the sulfhydryl group of the N-terminal cysteine of a prolipoprotein, the first step in the formation of mature lipoproteins. This Bacillus anthracis (strain A0248) protein is Phosphatidylglycerol--prolipoprotein diacylglyceryl transferase.